Reading from the N-terminus, the 782-residue chain is Zinc finger and SCAN domain-containing protein 10 (782 aa).

The disordered stretch occupies residues 1–37 (MLAEPVPDALEQEHPGAVKLEEDEVGEEDPRLAESRP). Residues 1 to 71 (MLAEPVPDAL…GRLRELCNHW (71 aa)) form the SCAN box domain. Composition is skewed to basic and acidic residues over residues 11-20 (EQEHPGAVKL) and 28-37 (EDPRLAESRP). A phosphoserine mark is found at Ser160 and Ser206. Disordered regions lie at residues 197-233 (LAPSSNWPMSPEPQEILQDPRESNPSQGPSWLEENSR) and 290-321 (SQTEKPEVAGEPLTQTVGQETSSTGWGGTPAD). C2H2-type zinc fingers lie at residues 292 to 315 (TEKPEVAGEPLTQTVGQETSSTGW), 321 to 343 (DGSEVVKVRGASDAPEPQGEMQF), 349 to 371 (GVNFPEMSHLQAHQLQSHPNLQP), 377 to 399 (SFRCLWCGKTFGRSSILKLHMRT), 421 to 443 (LTKHLLTHSSEPAFRCAECNQGF), 467 to 489 (EGKTKVPEMAAVLCSHCGQTFKR), 495 to 517 (RHLRNHAKDKDHLSSEDPGSLSS), 523 to 545 (PYVCSDCGKAFRQSEQLMIHTRR), 551 to 573 (RPFSCQVCGRCFTQNSQLISHQQ), 579 to 601 (KPHACPQCSKRFVRRAGLARHLL), 607 to 629 (RPYHCAQCGKSFRQMRDLTRHVR), 635 to 657 (KPCRCNECGEGFTQNAHLARHQR), 669 to 691 (ICGHRFRNSSNLARHRRSHTGER), and 697 to 719 (TCGRSFRRNAHLQRHLITHTGSK). The segment covering 302 to 313 (LTQTVGQETSST) has biased composition (polar residues). Position 485 is an N5-methylglutamine (Gln485). Residues 491 to 522 (SSLKRHLRNHAKDKDHLSSEDPGSLSSSQESN) are disordered. Positions 500–509 (HAKDKDHLSS) are enriched in basic and acidic residues. A compositionally biased stretch (low complexity) spans 510 to 521 (EDPGSLSSSQES).

As to quaternary structure, interacts with POU5F1/OCT4 and SOX2. Methylated at Gln-485 by N6AMT1. As to expression, embryonic stem (ES) cell-specific. Not expressed in adult, except in testis.

Its subcellular location is the nucleus. Embryonic stem (ES) cell-specific transcription factor required to maintain ES cell pluripotency. Can both activate and /or repress expression of target genes, depending on the context. Specifically binds the 5'-[GA]CGCNNGCG[CT]-3' DNA consensus sequence. Regulates expression of POU5F1/OCT4, ZSCAN4 and ALYREF/THOC4. The sequence is that of Zinc finger and SCAN domain-containing protein 10 (Zscan10) from Mus musculus (Mouse).